Here is a 321-residue protein sequence, read N- to C-terminus: Putative zinc finger CCCH domain-containing protein 9 (321 aa).

Disordered stretches follow at residues 1–59 and 181–269; these read MADA…PGKK and REAE…NLQE. A compositionally biased stretch (basic and acidic residues) spans 10–29; the sequence is EAERRSDETESRSIKEPKEK. The segment at 55–83 adopts a C3H1-type zinc-finger fold; that stretch reads RPGKKDCQFYLKNGLCRYRSSCRFNHPTQ. Residues 164-290 adopt a coiled-coil conformation; the sequence is TEWRFERERM…EARLRLEQIR (127 aa). Basic and acidic residues-rich tracts occupy residues 181-224 and 231-244; these read REAE…REAQ and RQRD…REAQ.

This chain is Putative zinc finger CCCH domain-containing protein 9, found in Arabidopsis thaliana (Mouse-ear cress).